The following is a 235-amino-acid chain: Uridylate kinase (235 aa).

Lys9–Gly12 serves as a coordination point for ATP. A UMP-binding site is contributed by Gly51. 2 residues coordinate ATP: Gly52 and Arg56. UMP is bound by residues Asp71 and Ser133 to Thr140. ATP contacts are provided by Thr160, Tyr166, and Asp169.

This sequence belongs to the UMP kinase family. Homohexamer.

It localises to the cytoplasm. The enzyme catalyses UMP + ATP = UDP + ADP. The protein operates within pyrimidine metabolism; CTP biosynthesis via de novo pathway; UDP from UMP (UMPK route): step 1/1. Inhibited by UTP. Its function is as follows. Catalyzes the reversible phosphorylation of UMP to UDP. The sequence is that of Uridylate kinase from Gloeobacter violaceus (strain ATCC 29082 / PCC 7421).